The following is a 341-amino-acid chain: Protein RecA, plasmid (341 aa).

80 to 87 (GAESSGKT) serves as a coordination point for ATP.

Belongs to the RecA family.

It localises to the cytoplasm. Its function is as follows. Can catalyze the hydrolysis of ATP in the presence of single-stranded DNA, the ATP-dependent uptake of single-stranded DNA by duplex DNA, and the ATP-dependent hybridization of homologous single-stranded DNAs. It interacts with LexA causing its activation and leading to its autocatalytic cleavage. This Lactococcus lactis subsp. lactis (Streptococcus lactis) protein is Protein RecA, plasmid.